We begin with the raw amino-acid sequence, 308 residues long: Vomeronasal type-1 receptor 92 (308 aa).

Topologically, residues 1–18 (MNKDNTLHTIMKITMFSE) are extracellular. A helical transmembrane segment spans residues 19-39 (VSVGISANSILFFAHLCMLLG). The Cytoplasmic portion of the chain corresponds to 40-48 (ENRPKPFHL). A helical transmembrane segment spans residues 49 to 69 (YIVSLSLTQLILLITMGLIAV). The Extracellular segment spans residues 70-91 (DMFMSWGRWDSTPCQSLIYLHR). Cysteine 83 and cysteine 170 form a disulfide bridge. The helical transmembrane segment at 92 to 112 (LLRGFTLCAACLLNVFWMITL) threads the bilayer. At 113 to 132 (SPRSSCLSKFKHNSPHHISG) the chain is on the cytoplasmic side. The chain crosses the membrane as a helical span at residues 133-153 (AFLFLCVLYMSFSSHLLVSII). Residues 154–188 (ATPNLTSNIFMYVTQSCSLLPMSYSRTSTFSTTIA) lie on the Extracellular side of the membrane. Asparagine 157 carries an N-linked (GlcNAc...) asparagine glycan. Residues 189 to 209 (IREAFLISLMALSSGFMVTLL) traverse the membrane as a helical segment. The Cytoplasmic portion of the chain corresponds to 210–236 (WRHKKQAQHLHSTSLSSKASPERRATR). The helical transmembrane segment at 237–257 (TILLLMSFFVVLYILENVVFY) threads the bilayer. Topologically, residues 258-267 (SRMKFKDGSM) are extracellular. Residues 268 to 288 (FYCVQIIVSHSYATISPFVFI) traverse the membrane as a helical segment. Residues 289 to 308 (CTEKHMTKILRSVCTRIINI) are Cytoplasmic-facing.

It belongs to the G-protein coupled receptor 1 family.

The protein resides in the cell membrane. Functionally, putative pheromone receptor implicated in the regulation of social as well as reproductive behavior. In Rattus norvegicus (Rat), this protein is Vomeronasal type-1 receptor 92 (Vom1r92).